We begin with the raw amino-acid sequence, 420 residues long: Multiple sugar-binding protein (420 aa).

An N-terminal signal peptide occupies residues 1–22 (MKWYKKIGLLGIVGLTSVLLAA). Residue Cys-23 is the site of N-palmitoyl cysteine attachment. Cys-23 carries the S-diacylglycerol cysteine lipid modification.

This sequence belongs to the bacterial solute-binding protein 1 family.

The protein resides in the cell membrane. Its function is as follows. Involved in a binding protein-dependent transport system responsible for the uptake of melibiose, raffinose and isomaltotriose. This is Multiple sugar-binding protein from Streptococcus mutans serotype c (strain ATCC 700610 / UA159).